Here is a 626-residue protein sequence, read N- to C-terminus: FAD-binding monooxygenase moxY (626 aa).

Positions methionine 1–serine 23 are enriched in low complexity. The segment at methionine 1–threonine 47 is disordered. The segment covering valine 31 to threonine 47 has biased composition (polar residues). FAD is bound by residues threonine 96–glutamate 99, aspartate 108–isoleucine 109, and tyrosine 114. Glycine 106–aspartate 108 lines the NADP(+) pocket. Residues serine 243–glutamine 249 and arginine 266–threonine 267 each bind NADP(+).

It belongs to the FAD-binding monooxygenase family. FAD serves as cofactor.

Its pathway is mycotoxin biosynthesis. Functionally, FAD-binding monooxygenase; part of the fragmented gene cluster that mediates the biosynthesis of dothistromin (DOTH), a polyketide toxin very similar in structure to the aflatoxin precursor, versicolorin B. The first step of the pathway is the conversion of acetate to norsolorinic acid (NOR) and requires the fatty acid synthase subunits hexA and hexB, as well as the polyketide synthase pksA. PksA combines a hexanoyl starter unit and 7 malonyl-CoA extender units to synthesize the precursor NOR. The hexanoyl starter unit is provided to the acyl-carrier protein (ACP) domain by the fungal fatty acid synthase hexA/hexB. The second step is the conversion of NOR to averantin (AVN) and requires the norsolorinic acid ketoreductase nor1, which catalyzes the dehydration of norsolorinic acid to form (1'S)-averantin. The cytochrome P450 monooxygenase avnA then catalyzes the hydroxylation of AVN to 5'hydroxyaverantin (HAVN). The next step is performed by adhA that transforms HAVN to averufin (AVF). Averufin might then be converted to hydroxyversicolorone by cypX and avfA. Hydroxyversicolorone is further converted versiconal hemiacetal acetate (VHA) by moxY. VHA is then the substrate for the versiconal hemiacetal acetate esterase est1 to yield versiconal (VAL). Versicolorin B synthase vbsA then converts VAL to versicolorin B (VERB) by closing the bisfuran ring. Then, the activity of the versicolorin B desaturase verB leads to versicolorin A (VERA). DotB, a predicted chloroperoxidase, may perform epoxidation of the A-ring of VERA. Alternatively, a cytochrome P450, such as cypX or avnA could catalyze this step. It is also possible that another, uncharacterized, cytochrome P450 enzyme is responsible for this step. Opening of the epoxide could potentially be achieved by the epoxide hydrolase epoA. However, epoA seems not to be required for DOTH biosynthesis, but other epoxide hydrolases may have the ability to complement this hydrolysis. Alternatively, opening of the epoxide ring could be achieved non-enzymatically. The next step is the deoxygenation of ring A to yield the 5,8-dihydroxyanthraquinone which is most likely catalyzed by the NADPH dehydrogenase encoded by ver1. The last stages of DOTH biosynthesis are proposed to involve hydroxylation of the bisfuran. OrdB and norB might have oxidative roles here. An alternative possibility is that cytochrome P450 monoogenases such as avnA and cypX might perform these steps in addition to previously proposed steps. In Dothistroma septosporum (Red band needle blight fungus), this protein is FAD-binding monooxygenase moxY.